Reading from the N-terminus, the 186-residue chain is Small ribosomal subunit protein uS19 (186 aa).

Residues 1–95 (MREAIKRYGS…YEELYAQYKQ (95 aa)) form a unknown region. Positions 96–186 (MTEKKAYVDP…EKTAKVVKKK (91 aa)) are small ribosomal subunit protein uS19.

It belongs to the universal ribosomal protein uS19 family.

Functionally, protein S19 forms a complex with S13 that binds strongly to the 16S ribosomal RNA. This is Small ribosomal subunit protein uS19 from Aquifex aeolicus (strain VF5).